Consider the following 665-residue polypeptide: Auxin response factor 1 (665 aa).

The TF-B3 DNA-binding region spans phenylalanine 124–methionine 226. 3 disordered regions span residues valine 356–leucine 408, proline 496–arginine 542, and lysine 645–arginine 665. 3 stretches are compositionally biased toward polar residues: residues valine 497–proline 519, leucine 530–arginine 542, and asparagine 651–arginine 665. A PB1 domain is found at arginine 542–lysine 635.

Belongs to the ARF family. As to quaternary structure, homodimers and heterodimers. Interacts with the auxin-responsive proteins IAA12, IAA13, IAA17 and with ARF2. Binds to RIN13 in the nucleus. As to expression, expressed in the whole plant.

It localises to the nucleus. Its subcellular location is the cytoplasm. In terms of biological role, auxin response factors (ARFs) are transcriptional factors that bind specifically to the DNA sequence 5'-TGTCTC-3' found in the auxin-responsive promoter elements (AuxREs). Seems to act as transcriptional repressor. Formation of heterodimers with Aux/IAA proteins may alter their ability to modulate early auxin response genes expression. Promotes flowering, stamen development, floral organ abscission and fruit dehiscence. Acts as a repressor of IAA2, IAA3 and IAA7. Together with RIN13, promotes leaf senescence and cell death. The polypeptide is Auxin response factor 1 (Arabidopsis thaliana (Mouse-ear cress)).